The chain runs to 342 residues: tRNA-specific 2-thiouridylase MnmA (342 aa).

ATP contacts are provided by residues 6 to 13 and Leu-32; that span reads LLSGGVDS. Cys-92 acts as the Nucleophile in catalysis. A disulfide bond links Cys-92 and Cys-191. Gly-116 is a binding site for ATP. The segment at 138-140 is interaction with tRNA; sequence KDQ. Cys-191 functions as the Cysteine persulfide intermediate in the catalytic mechanism. The tract at residues 293–294 is interaction with tRNA; it reads RY.

This sequence belongs to the MnmA/TRMU family.

It is found in the cytoplasm. It catalyses the reaction S-sulfanyl-L-cysteinyl-[protein] + uridine(34) in tRNA + AH2 + ATP = 2-thiouridine(34) in tRNA + L-cysteinyl-[protein] + A + AMP + diphosphate + H(+). Catalyzes the 2-thiolation of uridine at the wobble position (U34) of tRNA, leading to the formation of s(2)U34. The polypeptide is tRNA-specific 2-thiouridylase MnmA (Helicobacter pylori (strain G27)).